The primary structure comprises 493 residues: GTPase Der (493 aa).

2 EngA-type G domains span residues proline 3 to glycine 166 and leucine 207 to threonine 380. GTP contacts are provided by residues glycine 9–serine 16, aspartate 56–isoleucine 60, asparagine 118–aspartate 121, glycine 213–serine 220, aspartate 260–valine 264, and asparagine 325–aspartate 328. The 85-residue stretch at arginine 381 to alanine 465 folds into the KH-like domain.

It belongs to the TRAFAC class TrmE-Era-EngA-EngB-Septin-like GTPase superfamily. EngA (Der) GTPase family. As to quaternary structure, associates with the 50S ribosomal subunit.

Functionally, GTPase that plays an essential role in the late steps of ribosome biogenesis. This is GTPase Der from Photorhabdus laumondii subsp. laumondii (strain DSM 15139 / CIP 105565 / TT01) (Photorhabdus luminescens subsp. laumondii).